A 592-amino-acid chain; its full sequence is MTGYDSSEEAERDSSPADGYRQTPAQLSAQIRVLNDEIAQLRRRLAITPTDTRPLERQLTESANRINALSERNEKLVVTLRDARAQLLQLKEEVDRLAQPPSGYGVFLSAGPEGTAEVFTGGRRMRLAVSPTVEVEQLKRGQQLRLNEALTVVEAAQFDVIGEVCSLREVLDGDRALVVGHADEERVVHLAAPLMDIALKPGDSLLIDSKAGYAYERVPKSEVEDLVLEEVPDVAYEDIGGLTRQIEQIRDAVELPFLHADLYREYKLRPPKGVLLYGPPGCGKTLIAKAVANSLAKKVAALRGEETHTSYFLNIKGPELLNKYVGETERTIRLIFQRAREKASDGTPVIVFFDEMDSVFRTRGTGVSSDVETTIVPQLLSEIDGVEGLENVIVIGASNREDMIDPAILRPGRLDVKIKIERPDAEAARDIFTKYLVTELPIHPEDLAEFGGDRQACLSGMIQHTVERMYTETDENRFLEVTYANGDKEVLYFKDFNSGAMIQNIVDRAKKSAIKSRIETGVNGLRVSQLLEAITDEFAENEDLPNTTNPDDWARISGKKGERIVYIRTLVSGKQSEGSRAIDTASNTGQYL.

Residues 1–11 (MTGYDSSEEAE) are compositionally biased toward acidic residues. The interval 1 to 24 (MTGYDSSEEAERDSSPADGYRQTP) is disordered. Positions 25–99 (AQLSAQIRVL…LKEEVDRLAQ (75 aa)) form a coiled coil. 281-286 (GCGKTL) is a binding site for ATP. Residues 591-592 (YL) form a docks into pockets in the proteasome alpha-ring region.

Belongs to the AAA ATPase family. In terms of assembly, homohexamer. Assembles into a hexameric ring structure that caps the 20S proteasome core. Strongly interacts with the prokaryotic ubiquitin-like protein Pup through a hydrophobic interface; the interacting region of ARC lies in its N-terminal coiled-coil domain. There is one Pup binding site per ARC hexamer ring. Upon ATP-binding, the C-terminus of ARC interacts with the alpha-rings of the proteasome core, possibly by binding to the intersubunit pockets.

It participates in protein degradation; proteasomal Pup-dependent pathway. In terms of biological role, ATPase which is responsible for recognizing, binding, unfolding and translocation of pupylated proteins into the bacterial 20S proteasome core particle. May be essential for opening the gate of the 20S proteasome via an interaction with its C-terminus, thereby allowing substrate entry and access to the site of proteolysis. Thus, the C-termini of the proteasomal ATPase may function like a 'key in a lock' to induce gate opening and therefore regulate proteolysis. This Nakamurella multipartita (strain ATCC 700099 / DSM 44233 / CIP 104796 / JCM 9543 / NBRC 105858 / Y-104) (Microsphaera multipartita) protein is Proteasome-associated ATPase.